The chain runs to 338 residues: Ketol-acid reductoisomerase (NADP(+)) (338 aa).

Residues Met1–Thr181 form the KARI N-terminal Rossmann domain. NADP(+) contacts are provided by residues Tyr24–Gln27, Arg47, Ser50, Ser52, and Asp82–Gln85. His107 is an active-site residue. Gly133 contacts NADP(+). Residues Thr182–Ile327 form the KARI C-terminal knotted domain. The Mg(2+) site is built by Asp190, Glu194, Glu226, and Glu230. Residue Ser251 participates in substrate binding.

This sequence belongs to the ketol-acid reductoisomerase family. Mg(2+) is required as a cofactor.

The catalysed reaction is (2R)-2,3-dihydroxy-3-methylbutanoate + NADP(+) = (2S)-2-acetolactate + NADPH + H(+). The enzyme catalyses (2R,3R)-2,3-dihydroxy-3-methylpentanoate + NADP(+) = (S)-2-ethyl-2-hydroxy-3-oxobutanoate + NADPH + H(+). It participates in amino-acid biosynthesis; L-isoleucine biosynthesis; L-isoleucine from 2-oxobutanoate: step 2/4. Its pathway is amino-acid biosynthesis; L-valine biosynthesis; L-valine from pyruvate: step 2/4. Functionally, involved in the biosynthesis of branched-chain amino acids (BCAA). Catalyzes an alkyl-migration followed by a ketol-acid reduction of (S)-2-acetolactate (S2AL) to yield (R)-2,3-dihydroxy-isovalerate. In the isomerase reaction, S2AL is rearranged via a Mg-dependent methyl migration to produce 3-hydroxy-3-methyl-2-ketobutyrate (HMKB). In the reductase reaction, this 2-ketoacid undergoes a metal-dependent reduction by NADPH to yield (R)-2,3-dihydroxy-isovalerate. This chain is Ketol-acid reductoisomerase (NADP(+)), found in Psychrobacter cryohalolentis (strain ATCC BAA-1226 / DSM 17306 / VKM B-2378 / K5).